We begin with the raw amino-acid sequence, 396 residues long: Formate-dependent phosphoribosylglycinamide formyltransferase (396 aa).

Residues 25-26 (EL) and Glu85 each bind N(1)-(5-phospho-beta-D-ribosyl)glycinamide. Residues Arg117, Lys158, 163–168 (SSGKGQ), 198–201 (EAFI), and Glu206 contribute to the ATP site. Residues 122–311 (RLAAETLAIP…EFALHVRAIL (190 aa)) enclose the ATP-grasp domain. Mg(2+) is bound by residues Glu270 and Glu282. Residues Asp289, Lys359, and 366 to 367 (RR) contribute to the N(1)-(5-phospho-beta-D-ribosyl)glycinamide site.

This sequence belongs to the PurK/PurT family. In terms of assembly, homodimer.

It carries out the reaction N(1)-(5-phospho-beta-D-ribosyl)glycinamide + formate + ATP = N(2)-formyl-N(1)-(5-phospho-beta-D-ribosyl)glycinamide + ADP + phosphate + H(+). It functions in the pathway purine metabolism; IMP biosynthesis via de novo pathway; N(2)-formyl-N(1)-(5-phospho-D-ribosyl)glycinamide from N(1)-(5-phospho-D-ribosyl)glycinamide (formate route): step 1/1. In terms of biological role, involved in the de novo purine biosynthesis. Catalyzes the transfer of formate to 5-phospho-ribosyl-glycinamide (GAR), producing 5-phospho-ribosyl-N-formylglycinamide (FGAR). Formate is provided by PurU via hydrolysis of 10-formyl-tetrahydrofolate. The chain is Formate-dependent phosphoribosylglycinamide formyltransferase from Shewanella frigidimarina (strain NCIMB 400).